The following is a 367-amino-acid chain: Glutamate 5-kinase (367 aa).

Lysine 10 serves as a coordination point for ATP. Positions 50, 137, and 149 each coordinate substrate. ATP contacts are provided by residues 169–170 and 211–217; these read TD and TGGMSTK. Residues 275-353 form the PUA domain; that stretch reads AGEITVDEGA…QEIDAILGYE (79 aa).

This sequence belongs to the glutamate 5-kinase family.

It is found in the cytoplasm. The catalysed reaction is L-glutamate + ATP = L-glutamyl 5-phosphate + ADP. The protein operates within amino-acid biosynthesis; L-proline biosynthesis; L-glutamate 5-semialdehyde from L-glutamate: step 1/2. Functionally, catalyzes the transfer of a phosphate group to glutamate to form L-glutamate 5-phosphate. This is Glutamate 5-kinase from Shigella flexneri.